Consider the following 298-residue polypeptide: uncharacterized protein (298 aa).

This sequence belongs to the glycosyltransferase 2 family.

This is an uncharacterized protein from Mycoplasma genitalium (strain ATCC 33530 / DSM 19775 / NCTC 10195 / G37) (Mycoplasmoides genitalium).